The following is a 42-amino-acid chain: Crotamine-IV-2 (42 aa).

Intrachain disulfides connect C4-C37, C11-C31, and C19-C38.

It belongs to the crotamine-myotoxin family. As to quaternary structure, monomer. Expressed by the venom gland.

Its subcellular location is the secreted. Its function is as follows. Cationic peptide that possesses multiple functions. It acts as a cell-penetrating peptide (CPP), and as a potent voltage-gated potassium channel (Kv) inhibitor. It exhibits antimicrobial activities, and hind limb paralysis. It also induces potent blockade of neuromuscular transmission in young chicken biventer cervicis preparation and potent myotoxic effect. In vivo, induces myonecrosis, upon intramuscular or subcutaneous injections into mice. This chain is Crotamine-IV-2, found in Crotalus durissus cumanensis (South American rattlesnake).